The primary structure comprises 377 residues: Glutamate 5-kinase (377 aa).

Position 15 (Lys15) interacts with ATP. Substrate is bound by residues Ser56, Asp143, and Asn155. Position 175–176 (175–176 (SD)) interacts with ATP. The 78-residue stretch at 281-358 (KGTLTIDAGA…PDVLIILGIS (78 aa)) folds into the PUA domain.

This sequence belongs to the glutamate 5-kinase family.

The protein localises to the cytoplasm. The enzyme catalyses L-glutamate + ATP = L-glutamyl 5-phosphate + ADP. Its pathway is amino-acid biosynthesis; L-proline biosynthesis; L-glutamate 5-semialdehyde from L-glutamate: step 1/2. Catalyzes the transfer of a phosphate group to glutamate to form L-glutamate 5-phosphate. This Rhodopseudomonas palustris (strain BisA53) protein is Glutamate 5-kinase.